The primary structure comprises 238 residues: Histone deacetylase 7 (238 aa).

Disordered regions lie at residues 1-26 (TPGSQPQPMDLRVGQRPTVEPPPEPA) and 47-72 (QQQRSAEPMRLSMDPPLPELQGGQQE). Residues 58–158 (SMDPPLPELQ…LPTEPPEHFP (101 aa)) are interaction with MEF2A. Serine 118 and serine 164 each carry phosphoserine. Residues 145-238 (PVPSLPTEPP…NPALGSEADG (94 aa)) form a disordered region. The span at 176–190 (KSLERRKNPLLRKES) shows a compositional bias: basic and acidic residues. Serine 190 bears the Phosphoserine; by PKD/PRKD2 mark. The span at 206 to 221 (SSPSSSSTPASGCSSP) shows a compositional bias: low complexity.

It belongs to the histone deacetylase family. HD type 2 subfamily. As to quaternary structure, interacts with HDAC1, HDAC2, HDAC3, HDAC4, HDAC5, NCOR1, NCOR2, SIN3A, SIN3B, RBBP4, RBBP7, MTA1L1, SAP30 and MBD3. Interacts with KAT5 and EDNRA. Interacts with the 14-3-3 protein YWHAE, MEF2A, MEF2B and MEF2C. Interacts with ZMYND15. Interacts with KDM5B. Interacts with PML. Interacts with FOXP3. Interacts with RARA. Post-translationally, may be phosphorylated by CaMK1. Phosphorylated by the PKC kinases PKN1 and PKN2, impairing nuclear import. Phosphorylation at Ser-164 by MARK2, MARK3 and PRKD1 promotes interaction with 14-3-3 proteins and export from the nucleus. Phosphorylation at Ser-164 is a prerequisite for phosphorylation at Ser-190.

The protein resides in the nucleus. It is found in the cytoplasm. It catalyses the reaction N(6)-acetyl-L-lysyl-[histone] + H2O = L-lysyl-[histone] + acetate. The catalysed reaction is N(6)-acetyl-L-lysyl-[protein] + H2O = L-lysyl-[protein] + acetate. Its function is as follows. Responsible for the deacetylation of lysine residues on the N-terminal part of the core histones (H2A, H2B, H3 and H4). Histone deacetylation gives a tag for epigenetic repression and plays an important role in transcriptional regulation, cell cycle progression and developmental events. Histone deacetylases act via the formation of large multiprotein complexes. Involved in muscle maturation by repressing transcription of myocyte enhancer factors such as MEF2A, MEF2B and MEF2C. During muscle differentiation, it shuttles into the cytoplasm, allowing the expression of myocyte enhancer factors. May be involved in Epstein-Barr virus (EBV) latency, possibly by repressing the viral BZLF1 gene. Positively regulates the transcriptional repressor activity of FOXP3. Serves as a corepressor of RARA, causing its deacetylation and inhibition of RARE DNA element binding. In association with RARA, plays a role in the repression of microRNA-10a and thereby in the inflammatory response. Also acetylates non-histone proteins, such as ALKBH5. The polypeptide is Histone deacetylase 7 (Hdac7) (Rattus norvegicus (Rat)).